The chain runs to 390 residues: Homeobox protein Hox-B2a (390 aa).

Disordered regions lie at residues 40-73, 81-100, 108-155, and 211-338; these read STAI…TASN, TAPP…GAPL, KEKK…LDNV, and MKHK…SLPD. Residues 52–73 are compositionally biased toward polar residues; sequence PSLSPCTGNQARPRSQKRTASN. The Antp-type hexapeptide motif lies at 103-108; sequence EFPWMK. Residues 118 to 135 are compositionally biased toward low complexity; the sequence is KPGATAAAAAASPSQASS. The segment at residues 158-217 is a DNA-binding region (homeobox); the sequence is SRRLRTAYTNTQLLELEKEFHFNKYLCRPRRVEIAALLDLTERQVKVWFQNRRMKHKRQT. Positions 244–262 are enriched in low complexity; that stretch reads SSQSLEVSGSGSAAPSESE. The span at 263 to 290 shows a compositional bias: polar residues; sequence TCPTTAAYTNSSDKSQPTPEEGQASQPE.

It belongs to the Antp homeobox family. Proboscipedia subfamily.

It is found in the nucleus. Sequence-specific transcription factor which is part of a developmental regulatory system that provides cells with specific positional identities on the anterior-posterior axis. Plays an important role in the patterning of hindbrain and pharyngeal arches. The protein is Homeobox protein Hox-B2a (hoxb2a) of Danio rerio (Zebrafish).